Reading from the N-terminus, the 421-residue chain is UDP-N-acetylglucosamine 1-carboxyvinyltransferase (421 aa).

Phosphoenolpyruvate is bound at residue 22–23 (KN). Residue Arg95 participates in UDP-N-acetyl-alpha-D-glucosamine binding. The active-site Proton donor is the Cys119. Cys119 carries the 2-(S-cysteinyl)pyruvic acid O-phosphothioketal modification. Residues 124-128 (RPVDQ), Asp309, and Ile331 each bind UDP-N-acetyl-alpha-D-glucosamine.

Belongs to the EPSP synthase family. MurA subfamily.

It localises to the cytoplasm. The catalysed reaction is phosphoenolpyruvate + UDP-N-acetyl-alpha-D-glucosamine = UDP-N-acetyl-3-O-(1-carboxyvinyl)-alpha-D-glucosamine + phosphate. It participates in cell wall biogenesis; peptidoglycan biosynthesis. Its function is as follows. Cell wall formation. Adds enolpyruvyl to UDP-N-acetylglucosamine. In Leptothrix cholodnii (strain ATCC 51168 / LMG 8142 / SP-6) (Leptothrix discophora (strain SP-6)), this protein is UDP-N-acetylglucosamine 1-carboxyvinyltransferase.